The sequence spans 438 residues: Gamma-glutamyl phosphate reductase (438 aa).

Belongs to the gamma-glutamyl phosphate reductase family.

It is found in the cytoplasm. It catalyses the reaction L-glutamate 5-semialdehyde + phosphate + NADP(+) = L-glutamyl 5-phosphate + NADPH + H(+). The protein operates within amino-acid biosynthesis; L-proline biosynthesis; L-glutamate 5-semialdehyde from L-glutamate: step 2/2. Functionally, catalyzes the NADPH-dependent reduction of L-glutamate 5-phosphate into L-glutamate 5-semialdehyde and phosphate. The product spontaneously undergoes cyclization to form 1-pyrroline-5-carboxylate. This Prochlorococcus marinus (strain MIT 9303) protein is Gamma-glutamyl phosphate reductase.